Consider the following 290-residue polypeptide: 33 kDa chaperonin (290 aa).

Disulfide bonds link Cys-235–Cys-237 and Cys-268–Cys-271.

This sequence belongs to the HSP33 family. Under oxidizing conditions two disulfide bonds are formed involving the reactive cysteines. Under reducing conditions zinc is bound to the reactive cysteines and the protein is inactive.

It is found in the cytoplasm. Functionally, redox regulated molecular chaperone. Protects both thermally unfolding and oxidatively damaged proteins from irreversible aggregation. Plays an important role in the bacterial defense system toward oxidative stress. The polypeptide is 33 kDa chaperonin (Streptococcus pneumoniae serotype 19F (strain G54)).